The following is a 576-amino-acid chain: 5'-nucleotidase (576 aa).

An N-terminal signal peptide occupies residues 1-28 (MRPAAAKVPKWLLLALSALLPQWPAASA). 2 residues coordinate Zn(2+): aspartate 38 and histidine 40. Cysteine 53 and cysteine 59 are disulfide-bonded. A glycan (N-linked (GlcNAc...) asparagine) is linked at asparagine 55. Residues aspartate 87, asparagine 119, histidine 222, and histidine 245 each contribute to the Zn(2+) site. Residues asparagine 313 and asparagine 335 are each glycosylated (N-linked (GlcNAc...) asparagine). Intrachain disulfides connect cysteine 355–cysteine 360 and cysteine 367–cysteine 389. An AMP-binding site is contributed by arginine 356. Arginine 356 lines the IMP pocket. The AMP site is built by asparagine 392 and arginine 397. The IMP site is built by asparagine 392 and arginine 397. N-linked (GlcNAc...) asparagine glycosylation is present at asparagine 405. AMP is bound at residue phenylalanine 419. An IMP-binding site is contributed by phenylalanine 419. Cysteine 478 and cysteine 481 are oxidised to a cystine. 2 residues coordinate AMP: tyrosine 502 and aspartate 508. Positions 502 and 508 each coordinate IMP. A lipid anchor (GPI-anchor amidated serine) is attached at serine 551. Positions 552–576 (AASHYQGSFPLVILSFWAMILILYQ) are cleaved as a propeptide — removed in mature form.

Belongs to the 5'-nucleotidase family. In terms of assembly, homodimer. Requires Zn(2+) as cofactor. In terms of tissue distribution, expressed at high levels in the placenta, kidney, lung and stomach and at lower levels in the thymus, spleen, skeletal muscle and esophagus.

Its subcellular location is the cell membrane. It catalyses the reaction a ribonucleoside 5'-phosphate + H2O = a ribonucleoside + phosphate. The catalysed reaction is a 2'-deoxyribonucleoside 5'-phosphate + H2O = a 2'-deoxyribonucleoside + phosphate. The enzyme catalyses dTMP + H2O = thymidine + phosphate. It carries out the reaction CMP + H2O = cytidine + phosphate. It catalyses the reaction IMP + H2O = inosine + phosphate. The catalysed reaction is AMP + H2O = adenosine + phosphate. The enzyme catalyses GMP + H2O = guanosine + phosphate. It carries out the reaction UMP + H2O = uridine + phosphate. It catalyses the reaction dAMP + H2O = 2'-deoxyadenosine + phosphate. The catalysed reaction is dCMP + H2O = 2'-deoxycytidine + phosphate. Functionally, catalyzes the hydrolysis of nucleotide monophosphates, releasing inorganic phosphate and the corresponding nucleoside. Hydrolyzes IMP. Shows a preference for ribonucleotide monophosphates over their equivalent deoxyribose forms. Although AMP is the preferred substrate can also hydrolyze UMP, GMP, CMP, dAMP, dCMP, dTMP, NAD and NMN. This chain is 5'-nucleotidase (Nt5e), found in Mus musculus (Mouse).